Here is a 340-residue protein sequence, read N- to C-terminus: MSAVITSMIVIGAGSYGTALAITLARNGNKVLLWGHDPVHVQAMKVARCNHAFLPNVIFPSTLYLETSLPVALTASRNVLIVVPSNVFGSVLTRIKPHLRPDARIVWATKGLEMNTGRLLQDVARDILGGHIPLAVISGPTFARELAAGLPTAIAIAATDVTFSADLQQLLHCSKSLLVECNIDFIGVQLGGALKNIIAIGAGISDGLGFGANARAALITRGLAEISRLGKAMGATPSTFMGMAGLGDLVLTCTDNQSRNRRFGILIGQGIEVQTAQKNIGLVVEGYTNTKDVLKLASRYRVVMPITEQLYQILYHNKNVYDAALTLLGRYYKDKQISYL.

The NADPH site is built by serine 15, tyrosine 16, histidine 36, and lysine 110. Sn-glycerol 3-phosphate-binding residues include lysine 110, glycine 139, and threonine 141. Residue alanine 143 coordinates NADPH. Residues lysine 195, aspartate 248, serine 258, arginine 259, and asparagine 260 each contribute to the sn-glycerol 3-phosphate site. The Proton acceptor role is filled by lysine 195. Arginine 259 serves as a coordination point for NADPH. The NADPH site is built by valine 283 and glutamate 285.

The protein belongs to the NAD-dependent glycerol-3-phosphate dehydrogenase family.

Its subcellular location is the cytoplasm. The enzyme catalyses sn-glycerol 3-phosphate + NAD(+) = dihydroxyacetone phosphate + NADH + H(+). It catalyses the reaction sn-glycerol 3-phosphate + NADP(+) = dihydroxyacetone phosphate + NADPH + H(+). It functions in the pathway membrane lipid metabolism; glycerophospholipid metabolism. Its function is as follows. Catalyzes the reduction of the glycolytic intermediate dihydroxyacetone phosphate (DHAP) to sn-glycerol 3-phosphate (G3P), the key precursor for phospholipid synthesis. The polypeptide is Glycerol-3-phosphate dehydrogenase [NAD(P)+] (Baumannia cicadellinicola subsp. Homalodisca coagulata).